The chain runs to 699 residues: Elongation factor G (699 aa).

A tr-type G domain is found at 8-290 (ERYRNIGIMA…GVIEYLPSPV (283 aa)). Residues 17 to 24 (AHIDAGKT), 88 to 92 (DTPGH), and 142 to 145 (NKMD) each bind GTP.

The protein belongs to the TRAFAC class translation factor GTPase superfamily. Classic translation factor GTPase family. EF-G/EF-2 subfamily.

It is found in the cytoplasm. Functionally, catalyzes the GTP-dependent ribosomal translocation step during translation elongation. During this step, the ribosome changes from the pre-translocational (PRE) to the post-translocational (POST) state as the newly formed A-site-bound peptidyl-tRNA and P-site-bound deacylated tRNA move to the P and E sites, respectively. Catalyzes the coordinated movement of the two tRNA molecules, the mRNA and conformational changes in the ribosome. The polypeptide is Elongation factor G (Alkalilimnicola ehrlichii (strain ATCC BAA-1101 / DSM 17681 / MLHE-1)).